The following is a 399-amino-acid chain: uncharacterized protein (399 aa).

Positions 375–399 are disordered; sequence AAGGHRGSHGKSEQAATVRVVDDRR.

Belongs to the mycobacterial PPE family.

This is an uncharacterized protein from Mycobacterium tuberculosis (strain CDC 1551 / Oshkosh).